Consider the following 101-residue polypeptide: Small ribosomal subunit protein uS14 (101 aa).

Belongs to the universal ribosomal protein uS14 family. In terms of assembly, part of the 30S ribosomal subunit. Contacts proteins S3 and S10.

Binds 16S rRNA, required for the assembly of 30S particles and may also be responsible for determining the conformation of the 16S rRNA at the A site. The sequence is that of Small ribosomal subunit protein uS14 from Citrobacter koseri (strain ATCC BAA-895 / CDC 4225-83 / SGSC4696).